The following is a 467-amino-acid chain: ATP synthase subunit beta (467 aa).

156 to 163 (GGAGVGKT) lines the ATP pocket.

This sequence belongs to the ATPase alpha/beta chains family. F-type ATPases have 2 components, CF(1) - the catalytic core - and CF(0) - the membrane proton channel. CF(1) has five subunits: alpha(3), beta(3), gamma(1), delta(1), epsilon(1). CF(0) has three main subunits: a(1), b(2) and c(9-12). The alpha and beta chains form an alternating ring which encloses part of the gamma chain. CF(1) is attached to CF(0) by a central stalk formed by the gamma and epsilon chains, while a peripheral stalk is formed by the delta and b chains.

The protein resides in the cell membrane. It carries out the reaction ATP + H2O + 4 H(+)(in) = ADP + phosphate + 5 H(+)(out). Its function is as follows. Produces ATP from ADP in the presence of a proton gradient across the membrane. The catalytic sites are hosted primarily by the beta subunits. In Cytobacillus firmus (Bacillus firmus), this protein is ATP synthase subunit beta.